We begin with the raw amino-acid sequence, 2551 residues long: Piezo-type mechanosensitive ion channel component (2551 aa).

8 helical membrane-spanning segments follow: residues 5–25 (YACMVLQRIVVPAVLVLAALM), 27–47 (PVGISFVYLLMFFVSPFVPLA), 56–76 (VTAFFIILLTLSTLVLLGHIT), 106–126 (FIDLQPFAIIEWLVPEVLVFA), 204–226 (IHFEGLVKISPLFCLATLFFAAV), 231–250 (VPGGFYFLIFLLSGTYWATC), 256–276 (GFALLLRCVMVVLVLHSLSIV), and 320–340 (LSLDSYLNPFALFFAYFALAL). The disordered stretch occupies residues 354–375 (STRKARTPQPLESGSSVAPSVT). Residues 363-375 (PLESGSSVAPSVT) show a composition bias toward polar residues. Transmembrane regions (helical) follow at residues 395–415 (TTTSILDQISYGFVSVGGFIY), 424–444 (ILMMAWSIVYHSWLTFVLLLS), 463–483 (PFIVLYAEALLIAQYIYGMDL), 516–536 (VPLIVKTAFVLMFWVTSRQFF), 548–568 (LADFIAPLQITVGSAGSSYLI), 588–608 (LLVRLWIWLLVLVIFLCAITG), 611–631 (MTGFRICYMALFLFFLLVFQS), 639–659 (IMYGFWLFLIFYAMSILILIY), and 695–715 (FLHLVSPTIIVILTVIQVHYF). Positions 731–741 (GSAQQKPTETT) are enriched in polar residues. A disordered region spans residues 731 to 772 (GSAQQKPTETTALEPAPSKRRGSAGSLRKSQGPSAEAAPGAT). 12 consecutive transmembrane segments (helical) span residues 819–839 (IAAFVCSVSEVCVLHIIFVGF), 857–877 (LISFIVTVIVLSKMIYQIEYL), 910–930 (LMSLLRTYIIYMVIVTMHAVI), 973–993 (LNFGFYKFGIEISLIALVSTI), 994–1014 (TYRQDIVAVVYALWLVVLLLL), 1022–1042 (IWGVFQAFFAISILTQYIVLV), 1071–1091 (GALHFNHVPKLIFDFIVLVIL), 1152–1172 (VLCGFYWFTLAVVFLAGTNIA), 1174–1194 (LLALGYLIGAFIFLWQGSDFY), 1198–1218 (IHTIIFRWKWLLAFNVANILI), 1239–1259 (WLVHMLGITCTSNVLTEQIML), and 1275–1295 (ITHQVVLLWDTICFAFIIFQL). Disordered regions lie at residues 1426 to 1521 (NITE…AKDS) and 1592 to 1658 (ESDE…PQQQ). The span at 1430–1448 (SEMKMQRRKTLYDKSKDAP) shows a compositional bias: basic and acidic residues. Over residues 1466-1477 (ATASSSASPAPT) the composition is skewed to low complexity. Residues 1497–1511 (QTSKETSDSKSKMEV) show a composition bias toward basic and acidic residues. 2 stretches are compositionally biased toward low complexity: residues 1621–1634 (PTSTTLNTNTTTTP) and 1644–1658 (LQPLQPNTTSTPQQQ). Transmembrane regions (helical) follow at residues 1718–1738 (ISSWYALLANTDLICYIVVFI), 1741–1761 (VVNASLISLPLPIMVFLWGTL), 1770–1790 (FWVTLIAYTQAIVLIKCIFQF), and 1817–1837 (AHYAIYDLILLLVLFLHRYLL). The segment at 1854-1876 (FTKPTASIDERDDSDNLSQPDSR) is disordered. 7 helical membrane-spanning segments follow: residues 1937 to 1957 (ALMFLCDFVNFFVLLFGFTAF), 1979 to 1999 (IPFLIMLLVQFLLIVIDRALY), 2008 to 2028 (IIFHFFSVIGIHIWMFFVVPA), 2033 to 2053 (TFNSLAPPIIFYVIKCFYMLL), 2075 to 2095 (FSMVNMIAFKVYMQIPFLYEL), 2151 to 2171 (IMGGTIVLLIVICIWGPLCLF), and 2431 to 2451 (TFSFLTAGGIIGLYTTFVLLA). The interval 2522–2551 (EYVDDDGDTDSIPSRMSVRRPEQLQPQQPQ) is disordered.

This sequence belongs to the PIEZO (TC 1.A.75) family.

It localises to the cell membrane. Its function is as follows. Component of a mechanosensitive channel required for rapidly adapting mechanically activated (MA) currents. Plays a major role in nociception (response to strong or painful touch). Required for maintaining the mechanosensitivity of tarsal bristle mechanosensors. During their evalulation of potential egg-laying sites, females determine the softest substrate for their eggs first by making a coarse evaluation of substrate hardness using mechanosensitive channels nan and Piezo in the leg tarsal bristles, followed by a much finer assessment using nan, iav and Tmc mechanosensitive channels on the labellum. Acts in the nompC- and nan-expressing neurons of the female leg tarsals, to sense the mild differences in egg-laying substrate stiffness. The sequence is that of Piezo-type mechanosensitive ion channel component from Drosophila melanogaster (Fruit fly).